The primary structure comprises 425 residues: Transmembrane protein 184A (425 aa).

The next 7 helical transmembrane spans lie at Leu51 to Leu71, Leu96 to Gly116, Phe133 to Met153, Thr189 to Phe209, Val226 to Phe246, Phe261 to Leu281, and Leu303 to Leu323. The interval Gln375–Leu425 is disordered. The segment covering His392–Ala402 has biased composition (low complexity).

It belongs to the TMEM184 family. In terms of tissue distribution, expressed in vascular cells (at protein level).

It is found in the cell membrane. The protein localises to the cytoplasm. It localises to the perinuclear region. Its subcellular location is the early endosome membrane. The protein resides in the endosome. It is found in the cytoplasmic vesicle. The protein localises to the secretory vesicle membrane. It localises to the cytoplasmic vesicle membrane. Acts as a heparin receptor in vascular cells. May be involved in vesicle transport in exocrine cells and Sertoli cells. The protein is Transmembrane protein 184A (Tmem184a) of Rattus norvegicus (Rat).